The chain runs to 387 residues: Double C2-like domain-containing protein gamma (387 aa).

C2 domains are found at residues 83–209 (ALGT…DICL) and 243–376 (ERGR…ELWH). Ca(2+) is bound by residues D274, D280, D334, D336, and D342.

The cofactor is Ca(2+).

In terms of biological role, may be involved in regulation of vesicular trafficking. In vitro, does not bind calcium and phospholipids. This Mus musculus (Mouse) protein is Double C2-like domain-containing protein gamma (Doc2g).